Here is a 325-residue protein sequence, read N- to C-terminus: Sulfite dehydrogenase subunit C (325 aa).

The next 8 helical transmembrane spans lie at 5–25, 43–63, 87–107, 126–146, 165–185, 186–206, 266–286, and 290–310; these read FSVI…LAMV, FYAV…GASF, EVIV…AHWF, LLLG…TAMI, FLFL…AYIG, NPLV…GLAS, VYLV…YLIG, and LPII…WSFF.

This sequence belongs to the DmsC family. As to quaternary structure, forms a heterotrimeric membrane-bound complex composed of a catalytic heterodimer (SoeAB) and a membrane anchor protein (SoeC).

Its subcellular location is the cell inner membrane. Its function is as follows. Part of the SoeABC complex that catalyzes the oxidation of sulfite to sulfate. SoeC probably anchors and stabilizes the catalytic subunits. This Allochromatium vinosum (strain ATCC 17899 / DSM 180 / NBRC 103801 / NCIMB 10441 / D) (Chromatium vinosum) protein is Sulfite dehydrogenase subunit C.